The following is a 303-amino-acid chain: Probable cell division protein WhiA (303 aa).

The H-T-H motif DNA-binding region spans 272-303 (SIQQLADSLSTPLTKSGVNHRLRKINKIADEL).

It belongs to the WhiA family.

In terms of biological role, involved in cell division and chromosome segregation. This chain is Probable cell division protein WhiA, found in Streptococcus pneumoniae serotype 4 (strain ATCC BAA-334 / TIGR4).